We begin with the raw amino-acid sequence, 198 residues long: Small ribosomal subunit protein uS2 (198 aa).

Belongs to the universal ribosomal protein uS2 family.

In Methanobrevibacter smithii (strain ATCC 35061 / DSM 861 / OCM 144 / PS), this protein is Small ribosomal subunit protein uS2.